The sequence spans 417 residues: Tumor necrosis factor receptor superfamily member 25 (417 aa).

An N-terminal signal peptide occupies residues 1–24; sequence MEQRPRGCAAVAAALLLVLLGARA. Residues 25 to 199 are Extracellular-facing; the sequence is QGGTRSPRCD…RCAAVCGWRQ (175 aa). TNFR-Cys repeat units follow at residues 34 to 71, 72 to 115, 116 to 163, and 164 to 192; these read DCAG…STCL, VCPQ…DTRC, GCKP…TDCG, and TCLP…ERCA. 12 disulfides stabilise this stretch: Cys-35–Cys-47, Cys-48–Cys-61, Cys-51–Cys-70, Cys-73–Cys-89, Cys-92–Cys-107, Cys-95–Cys-115, Cys-117–Cys-130, Cys-138–Cys-155, Cys-141–Cys-162, Cys-165–Cys-176, Cys-179–Cys-191, and Cys-187–Cys-195. A glycan (N-linked (GlcNAc...) asparagine) is linked at Asn-67. A glycan (N-linked (GlcNAc...) asparagine) is linked at Asn-106. The chain crosses the membrane as a helical span at residues 200–220; the sequence is MFWVQVLLAGLVVPLLLGATL. Residues 221 to 417 are Cytoplasmic-facing; it reads TYTYRHCWPH…DLRSRLQRGP (197 aa). One can recognise a Death domain in the interval 332-413; that stretch reads GPQLYDVMDA…GCVEDLRSRL (82 aa). Arg-352 carries a (Microbial infection) N-beta-linked (GlcNAc) arginine glycan.

As to quaternary structure, homodimer. Interacts strongly via the death domains with TNFRSF1 and TRADD to activate at least two distinct signaling cascades, apoptosis and NF-kappa-B signaling. Interacts with BAG4. (Microbial infection) Glycosylated at Arg-352 by enteropathogenic E.coli protein NleB1. In terms of processing, glycosylated. Abundantly expressed in thymocytes and lymphocytes. Detected in lymphocyte-rich tissues such as thymus, colon, intestine, and spleen. Also found in the prostate.

It is found in the cell membrane. It localises to the secreted. Its function is as follows. Receptor for TNFSF12/APO3L/TWEAK. Interacts directly with the adapter TRADD. Mediates activation of NF-kappa-B and induces apoptosis. May play a role in regulating lymphocyte homeostasis. The sequence is that of Tumor necrosis factor receptor superfamily member 25 (TNFRSF25) from Homo sapiens (Human).